Consider the following 787-residue polypeptide: Phenylalanine--tRNA ligase beta subunit (787 aa).

In terms of domain architecture, tRNA-binding spans 39–149; that stretch reads APAFAGVVIA…EDAPVGTNIR (111 aa). Positions 400–475 constitute a B5 domain; it reads PEVKQVGLRL…RVYGYENIPD (76 aa). 4 residues coordinate Mg(2+): aspartate 453, aspartate 459, glutamate 462, and glutamate 463. An FDX-ACB domain is found at 694-786; sequence SKFQPVRRDL…AATAAGARLR (93 aa).

It belongs to the phenylalanyl-tRNA synthetase beta subunit family. Type 1 subfamily. Tetramer of two alpha and two beta subunits. Mg(2+) is required as a cofactor.

Its subcellular location is the cytoplasm. The enzyme catalyses tRNA(Phe) + L-phenylalanine + ATP = L-phenylalanyl-tRNA(Phe) + AMP + diphosphate + H(+). The polypeptide is Phenylalanine--tRNA ligase beta subunit (pheT) (Neisseria meningitidis serogroup A / serotype 4A (strain DSM 15465 / Z2491)).